The chain runs to 224 residues: Small ribosomal subunit protein uS3 (224 aa).

The region spanning 38–106 (LREFVKEKLG…EVYLNVVEVR (69 aa)) is the KH type-2 domain.

This sequence belongs to the universal ribosomal protein uS3 family. As to quaternary structure, part of the 30S ribosomal subunit. Forms a tight complex with proteins S10 and S14.

Binds the lower part of the 30S subunit head. Binds mRNA in the 70S ribosome, positioning it for translation. The polypeptide is Small ribosomal subunit protein uS3 (Anaeromyxobacter dehalogenans (strain 2CP-C)).